Reading from the N-terminus, the 324-residue chain is MTLSWFHKLVPSKIRTEASTKSTVPEGLWCKCPSCNAILYKSEVERNLEVCPKCSHHMRISARKRLHLFLDPGNRLEIGEGLAPLDPLKFKDSKKYKDRLQQAQKATGEKDALIVVAGQLLGLPVVAGAFNFEFMGGSMGSVVGERFVRGVNHSLEHGAPFVVFSASGGARMQESLLSLFQMAKTSAALGRLSKARIPFISVLTDPTMGGVSASFAMLGDINIAEPGALIGFAGPRVIEQTVREKLPEGFQRSEFLLEHGAVDMIVDRRDLRERIAALLALMTRDGRAVAPAAAKAPPAIGEGAGEADLARCLSALPMDDPEAE.

Positions leucine 28 to proline 297 constitute a CoA carboxyltransferase N-terminal domain. Zn(2+)-binding residues include cysteine 32, cysteine 35, cysteine 51, and cysteine 54. Residues cysteine 32–cysteine 54 form a C4-type zinc finger.

It belongs to the AccD/PCCB family. Acetyl-CoA carboxylase is a heterohexamer composed of biotin carboxyl carrier protein (AccB), biotin carboxylase (AccC) and two subunits each of ACCase subunit alpha (AccA) and ACCase subunit beta (AccD). The cofactor is Zn(2+).

It localises to the cytoplasm. The catalysed reaction is N(6)-carboxybiotinyl-L-lysyl-[protein] + acetyl-CoA = N(6)-biotinyl-L-lysyl-[protein] + malonyl-CoA. It participates in lipid metabolism; malonyl-CoA biosynthesis; malonyl-CoA from acetyl-CoA: step 1/1. Its function is as follows. Component of the acetyl coenzyme A carboxylase (ACC) complex. Biotin carboxylase (BC) catalyzes the carboxylation of biotin on its carrier protein (BCCP) and then the CO(2) group is transferred by the transcarboxylase to acetyl-CoA to form malonyl-CoA. The protein is Acetyl-coenzyme A carboxylase carboxyl transferase subunit beta of Methylococcus capsulatus (strain ATCC 33009 / NCIMB 11132 / Bath).